The primary structure comprises 267 residues: MTAIPTPYEDLLRTIRDEGAHKDDRTGTGTTSLFGQQIRYNLQEGFPLLTTKKVHFHSVVGELLWFLRGDSNVRWLQDNNIRIWNEWADEDGELGPVYGVQWRSWPTPDGRHIDQISRALEMLKNNPDSRRNIVSAWNVSELENMALPPCHLLFQLYVADGKLSCQLYQRSADMFLGVPFNIASYALLTHMFAQQADLEVGEFIWTGGDCHIYDNHTEQVDEQLSRAARPYPTLELNKAASLFDYTFEDIAVSNYDPHPLIRGKVAV.

Arg25 contacts dUMP. His55 lines the (6R)-5,10-methylene-5,6,7,8-tetrahydrofolate pocket. A dUMP-binding site is contributed by 130-131 (RR). Residue Cys150 is the Nucleophile of the active site. Residues 170 to 173 (RSAD), Asn181, and 211 to 213 (HIY) each bind dUMP. Asp173 is a binding site for (6R)-5,10-methylene-5,6,7,8-tetrahydrofolate. Ala266 is a binding site for (6R)-5,10-methylene-5,6,7,8-tetrahydrofolate.

This sequence belongs to the thymidylate synthase family. Bacterial-type ThyA subfamily. As to quaternary structure, homodimer.

Its subcellular location is the cytoplasm. It catalyses the reaction dUMP + (6R)-5,10-methylene-5,6,7,8-tetrahydrofolate = 7,8-dihydrofolate + dTMP. Its pathway is pyrimidine metabolism; dTTP biosynthesis. Catalyzes the reductive methylation of 2'-deoxyuridine-5'-monophosphate (dUMP) to 2'-deoxythymidine-5'-monophosphate (dTMP) while utilizing 5,10-methylenetetrahydrofolate (mTHF) as the methyl donor and reductant in the reaction, yielding dihydrofolate (DHF) as a by-product. This enzymatic reaction provides an intracellular de novo source of dTMP, an essential precursor for DNA biosynthesis. The polypeptide is Thymidylate synthase (Corynebacterium efficiens (strain DSM 44549 / YS-314 / AJ 12310 / JCM 11189 / NBRC 100395)).